Consider the following 141-residue polypeptide: Cystatin-SA (141 aa).

The first 20 residues, 1–20, serve as a signal peptide directing secretion; the sequence is MAWPLCTLLLLLATQAVALA. The Secondary area of contact motif lies at 76–80; it reads QIVGG. 2 disulfide bridges follow: Cys94-Cys104 and Cys118-Cys138.

As to expression, expressed in submandibular and sublingual saliva but not in parotid saliva (at protein level). Expressed in submandibular gland and parotid gland.

The protein localises to the secreted. Its function is as follows. Thiol protease inhibitor. The sequence is that of Cystatin-SA (CST2) from Homo sapiens (Human).